Reading from the N-terminus, the 136-residue chain is Small ribosomal subunit protein bS16 (136 aa).

Belongs to the bacterial ribosomal protein bS16 family.

This Pseudarthrobacter chlorophenolicus (strain ATCC 700700 / DSM 12829 / CIP 107037 / JCM 12360 / KCTC 9906 / NCIMB 13794 / A6) (Arthrobacter chlorophenolicus) protein is Small ribosomal subunit protein bS16.